The following is a 252-amino-acid chain: Probable transcriptional regulatory protein RF_0799 (252 aa).

The interval 1 to 21 is disordered; that stretch reads MAGHSKFKNIQHRKGAQDKKR.

Belongs to the TACO1 family.

It is found in the cytoplasm. In Rickettsia felis (strain ATCC VR-1525 / URRWXCal2) (Rickettsia azadi), this protein is Probable transcriptional regulatory protein RF_0799.